Here is a 444-residue protein sequence, read N- to C-terminus: Probable D-serine dehydratase (444 aa).

Lys118 is subject to N6-(pyridoxal phosphate)lysine.

It belongs to the serine/threonine dehydratase family. DsdA subfamily. It depends on pyridoxal 5'-phosphate as a cofactor.

It catalyses the reaction D-serine = pyruvate + NH4(+). In Acinetobacter baumannii (strain AB0057), this protein is Probable D-serine dehydratase.